The chain runs to 702 residues: MNSLFASTARGLEELLKTELENLGAVECQVVQGGVHFKGDTRLVYQSLMWSRLASRIMLPLGECKVYSDLDLYLGVQAINWTEMFNPGATFAVHFSGLNDTIRNSQYGAMKVKDAIVDAFTRKNLPRPNVDRDAPDIRVNVWLHKETASIALDLSGDGLHLRGYRDRAGIAPIKETLAAAIVMRSGWQPGTPLLDPMCGSGTLLIEAAMLATDRAPGLHRGRWGFSGWAQHDEAIWQEVKAEAQTRARKGLAEYSSHFYGSDSDARVIQRARTNARLAGIGELITFEVKDVAQLANPLPKGPYGTVLSNPPYGERLDSEPALIALHSLLGRIMKNQFGGWNLSLFSASPDLLSCLQLRADKQYKAKNGPLDCVQKNYHVAESTPDSKPAMAAEDYANRLRKNLKKFEKWARQEGIECYRLYDADLPEYNVAVDRYADWVVVQEYAPPKTIDAHKARQRLFDIIAATISVLGIAPNKLVLKTRERQKGKNQYQKLGEKGEFLEVTEYNAHLWVNLTDYLDTGLFLDHRIARRMLGQMSKGKDFLNLFSYTGSATVHAGLGGARSTTTVDMSRTYLEWAERNLRLNGLTGRAHRLIQADCLAWLREANEQFDLIFIDPPTFSNSKRMEDAFDVQRDHLVLMKDLKRLLRAGGTIMFSNNKRGFRMDLDGLAKLGLKAQEITQKTLSQDFARNRQIHNCWLITAA.

The region spanning 43-154 (LVYQSLMWSR…KETASIALDL (112 aa)) is the THUMP domain.

Belongs to the methyltransferase superfamily. RlmKL family.

It is found in the cytoplasm. The catalysed reaction is guanosine(2445) in 23S rRNA + S-adenosyl-L-methionine = N(2)-methylguanosine(2445) in 23S rRNA + S-adenosyl-L-homocysteine + H(+). The enzyme catalyses guanosine(2069) in 23S rRNA + S-adenosyl-L-methionine = N(2)-methylguanosine(2069) in 23S rRNA + S-adenosyl-L-homocysteine + H(+). Its function is as follows. Specifically methylates the guanine in position 2445 (m2G2445) and the guanine in position 2069 (m7G2069) of 23S rRNA. This chain is Ribosomal RNA large subunit methyltransferase K/L, found in Escherichia coli (strain SMS-3-5 / SECEC).